Here is a 366-residue protein sequence, read N- to C-terminus: Protein-glutamate methylesterase/protein-glutamine glutaminase (366 aa).

The Response regulatory domain maps to 5–123 (RVLVVDDSVV…SVGRSMEQVR (119 aa)). D56 bears the 4-aspartylphosphate mark. One can recognise a CheB-type methylesterase domain in the interval 163 to 355 (PLGGHRLLVI…PEILRRLARQ (193 aa)). Residues S175, H201, and D297 contribute to the active site.

The protein belongs to the CheB family. Phosphorylated by CheA. Phosphorylation of the N-terminal regulatory domain activates the methylesterase activity.

Its subcellular location is the cytoplasm. It catalyses the reaction [protein]-L-glutamate 5-O-methyl ester + H2O = L-glutamyl-[protein] + methanol + H(+). It carries out the reaction L-glutaminyl-[protein] + H2O = L-glutamyl-[protein] + NH4(+). Its function is as follows. Involved in chemotaxis. Part of a chemotaxis signal transduction system that modulates chemotaxis in response to various stimuli. Catalyzes the demethylation of specific methylglutamate residues introduced into the chemoreceptors (methyl-accepting chemotaxis proteins or MCP) by CheR. Also mediates the irreversible deamidation of specific glutamine residues to glutamic acid. The protein is Protein-glutamate methylesterase/protein-glutamine glutaminase of Nocardioides sp. (strain ATCC BAA-499 / JS614).